The primary structure comprises 93 residues: LQLARISGVKALSIQALAQALRPQLQVGDTLKLLILKEGKEPHQGVGYLEDGSMVVVDGGSRYRGQEIEVVVTQAIQTQVGRLFFARPAQGAQ.

The TRAM domain maps to 24–85 (QLQVGDTLKL…IQTQVGRLFF (62 aa)).

It belongs to the ycf81 family.

This is an uncharacterized protein from Thermus thermophilus.